A 421-amino-acid polypeptide reads, in one-letter code: Odorant receptor 67b (421 aa).

Residues 1 to 48 (MQDQLDHELERIDKLPKLGLLWVEYSAYALGVNIAPRKRSSKYCRLTR) lie on the Cytoplasmic side of the membrane. Residues 49-69 (ILVLIVNLSIIYSLVAFIMEN) form a helical membrane-spanning segment. The Extracellular portion of the chain corresponds to 70–71 (YM). The helical transmembrane segment at 72-92 (ISFETYVEAVLLTFQLSVGVV) threads the bilayer. The Cytoplasmic portion of the chain corresponds to 93-151 (KMFHFQNKVESCSQLVFSTETGEVLKSLGLFQLDLPRKKELLSSVSLILLNNWMIIDRQ). Residues 152 to 172 (VMFFFKIVCMPVLYYCVRPYF) traverse the membrane as a helical segment. The Extracellular portion of the chain corresponds to 173-217 (QYIFDCYIKDKDTCEMTLTYPAIVPYLQLGNYEFPSYVIRFFLLQ). A helical transmembrane segment spans residues 218–238 (SGPLWCFFAVFGFNSLFVVLT). Topologically, residues 239–289 (RYESGLIKVLRFLVQNSTSDILVPKDQRVKYLQCCVRLFARISSHHNQIEN) are cytoplasmic. Residues 290 to 310 (LFKYIILVQCSVSSILICMLL) traverse the membrane as a helical segment. Over 311–315 (YKIST) the chain is Extracellular. Residues 316-336 (VLEVGWVWMGMIMVYFVTIAL) traverse the membrane as a helical segment. Over 337 to 384 (EITLYNVSAQKVESQSELLFHDWYNCSWYNESREFKFMIKMMLLFSRR) the chain is Cytoplasmic. The chain crosses the membrane as a helical span at residues 385 to 405 (TFVLSVGGFTSLSHKFLVQVF). At 406 to 421 (RLSANFFLLLRNMNNK) the chain is on the extracellular side.

It belongs to the insect chemoreceptor superfamily. Heteromeric odorant receptor channel (TC 1.A.69) family. Or63a subfamily. In terms of assembly, interacts with Orco. Complexes exist early in the endomembrane system in olfactory sensory neurons (OSNs), coupling these complexes to the conserved ciliary trafficking pathway.

The protein localises to the cell membrane. Functionally, odorant receptor which mediates acceptance or avoidance behavior, depending on its substrates. The odorant receptor repertoire encodes a large collection of odor stimuli that vary widely in identity, intensity, and duration. May form a complex with Orco to form odorant-sensing units, providing sensitive and prolonged odorant signaling and calcium permeability. Involved in the behavioral responses to ethyl acetate, pentyl acetate, methyl caproate, anisole, heptanal, 2-heptanone, r-carvone, nonanoic acid, and pyrazines. The polypeptide is Odorant receptor 67b (Or67b) (Drosophila melanogaster (Fruit fly)).